Consider the following 746-residue polypeptide: UvrABC system protein C (746 aa).

The GIY-YIG domain maps to 18-97 (AKPGVYKWRD…IKEFDPRFNV (80 aa)). In terms of domain architecture, UVR spans 211-246 (RPYIAQLTRDMKEASAELEFEKAARLRDQIQMLETV). The tract at residues 557-577 (ANGNDNGEGGSDISGKGHAVP) is disordered.

Belongs to the UvrC family. Interacts with UvrB in an incision complex.

The protein resides in the cytoplasm. Functionally, the UvrABC repair system catalyzes the recognition and processing of DNA lesions. UvrC both incises the 5' and 3' sides of the lesion. The N-terminal half is responsible for the 3' incision and the C-terminal half is responsible for the 5' incision. This chain is UvrABC system protein C, found in Bifidobacterium longum (strain DJO10A).